The following is a 486-amino-acid chain: Ribosomal RNA small subunit methyltransferase F (486 aa).

S-adenosyl-L-methionine-binding positions include 124-130 (ASAPGSK), E148, D175, and D193. The active-site Nucleophile is C246.

It belongs to the class I-like SAM-binding methyltransferase superfamily. RsmB/NOP family.

It is found in the cytoplasm. It catalyses the reaction cytidine(1407) in 16S rRNA + S-adenosyl-L-methionine = 5-methylcytidine(1407) in 16S rRNA + S-adenosyl-L-homocysteine + H(+). Functionally, specifically methylates the cytosine at position 1407 (m5C1407) of 16S rRNA. The polypeptide is Ribosomal RNA small subunit methyltransferase F (Shewanella baltica (strain OS155 / ATCC BAA-1091)).